Consider the following 336-residue polypeptide: Inositol 2-dehydrogenase (336 aa).

Belongs to the Gfo/Idh/MocA family. Homotetramer.

It carries out the reaction myo-inositol + NAD(+) = scyllo-inosose + NADH + H(+). Its function is as follows. Involved in the oxidation of myo-inositol (MI) to 2-keto-myo-inositol (2KMI or 2-inosose). The sequence is that of Inositol 2-dehydrogenase from Acidiphilium cryptum (strain JF-5).